A 143-amino-acid chain; its full sequence is UPF0201 protein PAE1632 (143 aa).

The protein belongs to the UPF0201 family.

The polypeptide is UPF0201 protein PAE1632 (Pyrobaculum aerophilum (strain ATCC 51768 / DSM 7523 / JCM 9630 / CIP 104966 / NBRC 100827 / IM2)).